The chain runs to 1453 residues: Scavenger receptor cysteine-rich type 1 protein M160 (1453 aa).

Residues 1–40 form the signal peptide; that stretch reads MMLPQNSWHIDFGRCCCHQNLFSAVVTCILLLNSCFLISS. Topologically, residues 41–1359 are extracellular; it reads FNGTDLELRL…LKSLNASSGH (1319 aa). N-linked (GlcNAc...) asparagine glycans are attached at residues N42, N78, N120, and N161. SRCR domains follow at residues 48 to 148, 155 to 255, 262 to 362, 369 to 469, 476 to 576, 583 to 683, 690 to 790, 795 to 895, and 900 to 1000; these read LRLV…VNCY, LRLV…LTCY, LRLV…VICS, LRLA…VICS, LRLV…VTCS, LRLV…LICS, PRLV…VVCS, and VRLV…VICT. Cystine bridges form between C73–C137, C86–C147, and C117–C127. 6 disulfide bridges follow: C180–C244, C193–C254, C224–C234, C287–C351, C300–C361, and C331–C341. Residues N334, N377, N441, N548, and N637 are each glycosylated (N-linked (GlcNAc...) asparagine). 18 disulfides stabilise this stretch: C394–C458, C407–C468, C438–C448, C501–C565, C514–C575, C545–C555, C608–C672, C621–C682, C652–C662, C715–C779, C728–C789, C759–C769, C820–C884, C833–C894, C864–C874, C925–C989, C938–C999, and C969–C979. 4 N-linked (GlcNAc...) asparagine glycosylation sites follow: N972, N1013, N1084, and N1104. SRCR domains lie at 1036–1136, 1141–1243, and 1246–1346; these read LRLV…VICS, LRLY…ITCE, and IRVR…VRCS. Cystine bridges form between C1061–C1125, C1074–C1135, and C1105–C1115. N-linked (GlcNAc...) asparagine glycosylation is found at N1161 and N1171. Cystine bridges form between C1181/C1242, C1212/C1222, C1271/C1335, C1284/C1345, and C1315/C1325. N-linked (GlcNAc...) asparagine glycosylation is found at N1318 and N1354. Residues 1360–1380 traverse the membrane as a helical segment; that stretch reads LALILSSIFGLLLLVLFILFL. The Cytoplasmic segment spans residues 1381 to 1453; the sequence is TWCRVQKQKH…GVLPASEATK (73 aa). A compositionally biased stretch (basic and acidic residues) spans 1418–1435; sequence EDPHGTRTSDDTPNHGCE. Residues 1418–1453 are disordered; the sequence is EDPHGTRTSDDTPNHGCEDASDTSLLGVLPASEATK.

As to expression, isoform 1 is highly expressed in the spleen, lymph nodes, thymus, and fetal liver and weakly expressed in bone marrow and no expression was found in peripheral blood leukocytes. Isoform 1 expression is restricted to the monocyte and macrophage cell lines. Isoform 2 is only expressed in spleen.

The protein resides in the cell membrane. The protein localises to the secreted. The sequence is that of Scavenger receptor cysteine-rich type 1 protein M160 (CD163L1) from Homo sapiens (Human).